A 399-amino-acid chain; its full sequence is Tryptophan synthase beta chain (399 aa).

Residue lysine 92 is modified to N6-(pyridoxal phosphate)lysine.

This sequence belongs to the TrpB family. As to quaternary structure, tetramer of two alpha and two beta chains. Pyridoxal 5'-phosphate is required as a cofactor.

It carries out the reaction (1S,2R)-1-C-(indol-3-yl)glycerol 3-phosphate + L-serine = D-glyceraldehyde 3-phosphate + L-tryptophan + H2O. The protein operates within amino-acid biosynthesis; L-tryptophan biosynthesis; L-tryptophan from chorismate: step 5/5. In terms of biological role, the beta subunit is responsible for the synthesis of L-tryptophan from indole and L-serine. The protein is Tryptophan synthase beta chain of Thiobacillus denitrificans (strain ATCC 25259 / T1).